The chain runs to 273 residues: Kit ligand (273 aa).

A signal peptide spans 1–25; that stretch reads MKKTQTWIITCIYLQLLLFNPLVKT. At Q26 the chain carries Pyrrolidone carboxylic acid. The Extracellular segment spans residues 26 to 214; sequence QEICRNPVTD…AKSPEDPGLQ (189 aa). Cystine bridges form between C29–C114 and C68–C163. N90 carries N-linked (GlcNAc...) asparagine; partial glycosylation. N-linked (GlcNAc...) asparagine glycosylation occurs at N145. O-linked (GalNAc...) serine glycosylation is present at S167. O-linked (GalNAc...) threonine glycosylation is found at T168 and T180. Positions 190-211 are disordered; that stretch reads ASSLRNDSSSSNRKAAKSPEDP. The segment covering 191 to 202 has biased composition (low complexity); the sequence is SSLRNDSSSSNR. N195 carries an N-linked (GlcNAc...) asparagine glycan. Residues 215 to 237 traverse the membrane as a helical segment; it reads WTAMALPALISLVIGFAFGALYW. The Cytoplasmic portion of the chain corresponds to 238 to 273; it reads KKKQSSLTRAVENIQINEEDNEISMLQQKEREFQEV.

It belongs to the SCF family. As to quaternary structure, homodimer, non-covalently linked. Heterotetramer with KIT, binding two KIT molecules; thereby mediates KIT dimerization and subsequent activation by autophosphorylation. A soluble form is produced by proteolytic processing of isoform 1 in the extracellular domain. In terms of processing, the identity of N- and O-linked saccharides is not reported in PubMed:1708771. The O-linked polysaccharides are probably the mucin type linked to GalNAc.

The protein localises to the cell membrane. It is found in the cytoplasm. It localises to the cytoskeleton. The protein resides in the cell projection. Its subcellular location is the lamellipodium. The protein localises to the filopodium. It is found in the secreted. Its function is as follows. Ligand for the receptor-type protein-tyrosine kinase KIT. Plays an essential role in the regulation of cell survival and proliferation, hematopoiesis, stem cell maintenance, gametogenesis, mast cell development, migration and function, and in melanogenesis. KITLG/SCF binding can activate several signaling pathways. Promotes phosphorylation of PIK3R1, the regulatory subunit of phosphatidylinositol 3-kinase, and subsequent activation of the kinase AKT1. KITLG/SCF and KIT also transmit signals via GRB2 and activation of RAS, RAF1 and the MAP kinases MAPK1/ERK2 and/or MAPK3/ERK1. KITLG/SCF and KIT promote activation of STAT family members STAT1, STAT3 and STAT5. KITLG/SCF and KIT promote activation of PLCG1, leading to the production of the cellular signaling molecules diacylglycerol and inositol 1,4,5-trisphosphate. KITLG/SCF acts synergistically with other cytokines, probably interleukins. In Rattus norvegicus (Rat), this protein is Kit ligand (Kitlg).